A 195-amino-acid polypeptide reads, in one-letter code: PRELI domain containing protein 3B (195 aa).

Residues 1–172 form the PRELI/MSF1 domain; sequence MKIWTSEHVF…VIHKLNAEIE (172 aa). Phosphoserine is present on residues Ser46 and Ser51.

Belongs to the slowmo family.

The polypeptide is PRELI domain containing protein 3B (Prelid3b) (Rattus norvegicus (Rat)).